The chain runs to 537 residues: Immunoglobulin-like domain-containing receptor 1 (537 aa).

An N-terminal signal peptide occupies residues 1 to 22 (MGCGLLAAGLLLFTWLPAGCLS). In terms of domain architecture, Ig-like V-type spans 23–161 (LLVTVQHTER…TSGDPDKEVK (139 aa)). Residues 23 to 166 (LLVTVQHTER…DKEVKLIVLH (144 aa)) are Extracellular-facing. The cysteines at positions 44 and 144 are disulfide-linked. A helical transmembrane segment spans residues 167-187 (WLTVIFIILGALLLLLLIGVC). Over 188–537 (WCQCCPQYCC…SSHSGRSVVI (350 aa)) the chain is Cytoplasmic. The interval 333–537 (PPLIRDPPSS…SSHSGRSVVI (205 aa)) is disordered. A compositionally biased stretch (polar residues) spans 341 to 357 (SSRTSNPSHQQRLNAVS). Composition is skewed to basic and acidic residues over residues 359 to 380 (RHCDLSERPRQRHHSDFLRELQ) and 434 to 444 (RRPEPREGAQR). A compositionally biased stretch (basic residues) spans 480–490 (QRRHHHRRRRS). 2 positions are modified to phosphoserine: serine 490 and serine 492. The segment covering 518-530 (GNVERRLERESSH) has biased composition (basic and acidic residues).

This sequence belongs to the immunoglobulin superfamily. LISCH7 family. In terms of assembly, homooligomer. Interacts with MARVELD2 and OCLN; the interaction is required to recruit MARVELD2 to tricellular contacts. Interacts (via C-terminus) with TRA2A, TRA2B and SRSF1. Interacts with PLSCR1. Expressed in the vestibule and in hair cells and supporting cells of the cochlea. Expressed in epithelial tissues. Highly expressed in colon but also detected in small intestine, bladder and lung. In colon, expressed in the upper portion of the crypts (at protein level). Expressed in CCK secretory cells of the proximal small intestine (at protein level). Expressed in the organ of Corti, stria vascularis, utricle and saccule of the inner ear.

It localises to the cell membrane. The protein resides in the cell junction. The protein localises to the tight junction. Its subcellular location is the nucleus. It is found in the cytoplasm. Its function is as follows. Maintains epithelial barrier function by recruiting MARVELD2/tricellulin to tricellular tight junctions (tTJs). Crucial for normal hearing by maintaining the structural and functional integrity of tTJs, which are critical for the survival of auditory neurosensory HCs. Mediates fatty acids and lipoproteins-stimulated CCK/cholecystokinin secretion in the small intestine. In the inner ear, may regulate alternative pre-mRNA splicing via binding to TRA2A, TRA2B and SRSF1. The polypeptide is Immunoglobulin-like domain-containing receptor 1 (Mus musculus (Mouse)).